A 285-amino-acid chain; its full sequence is Aquaporin-6 (285 aa).

The next 3 helical transmembrane spans lie at 36-56 (IFWKSIRAELIGSLVLMVFSC), 76-96 (YCFKSISAHFNPVITIAALLL), and 105-125 (ISLVLAQTLGTLSGASVCYYG). The NPA 1 motif lies at 86–88 (NPV). An N-linked (GlcNAc...) asparagine glycan is attached at Asn128. 2 helical membrane passes run 143–163 (VSPAKGFGYEFFGTFVIILTM) and 177–197 (GDSNLLPLIFGLSVGLSSGMA). Residues 206–208 (NPM) carry the NPA 2 motif. The chain crosses the membrane as a helical span at residues 225–245 (YIYWIGPIFGCLLAVFTFDYT).

Belongs to the MIP/aquaporin (TC 1.A.8) family.

Its subcellular location is the cell membrane. Its function is as follows. Probable water-specific aquaporin that may modulate the water content and osmolytes during anhydrobiosis. The sequence is that of Aquaporin-6 from Milnesium tardigradum (Water bear).